A 244-amino-acid polypeptide reads, in one-letter code: MSESASKTPGSYSRVMLKISGEALMGDQGYGLHPPTVARIAQEVKSVHDMGIEICMVIGGGNIFRGLQGSAQGMERATADYMGMLATVMNALAMQAALEALKIHTRVISAIRMDEVAEPYIRRRAVRHLEKKRVCIFAAGTGNPYFTTDTAATLRANEMNCEAIFKGTKVDGVYDKDPNKFPDAKRYDDVTYDEVLQKHLGVMDASAIALARDNDLPIIVFSLDEPGGFRGILAGSGTYTRVHG.

18–21 (KISG) serves as a coordination point for ATP. Residues 26 to 31 (GDQGYG) form an involved in allosteric activation by GTP region. G60 contributes to the UMP binding site. The ATP site is built by G61 and R65. Residues D80 and 141–148 (TGNPYFTT) each bind UMP. ATP contacts are provided by T168, Y174, and D177.

The protein belongs to the UMP kinase family. In terms of assembly, homohexamer.

Its subcellular location is the cytoplasm. The catalysed reaction is UMP + ATP = UDP + ADP. The protein operates within pyrimidine metabolism; CTP biosynthesis via de novo pathway; UDP from UMP (UMPK route): step 1/1. With respect to regulation, allosterically activated by GTP. Inhibited by UTP. Functionally, catalyzes the reversible phosphorylation of UMP to UDP. The sequence is that of Uridylate kinase from Paracoccus denitrificans (strain Pd 1222).